Reading from the N-terminus, the 857-residue chain is Major vault protein (857 aa).

8 MVP repeats span residues 18 to 60 (PYYY…ITIP), 62 to 122 (RHYC…KVVQ), 123 to 174 (ANAA…TIIR), 175 to 227 (PNQA…YVLT), 228 to 282 (EKNA…NTLT), 284 to 332 (RQYC…FILG), 333 to 387 (EDEG…IPLD), and 388 to 441 (ENEG…VAER). The tract at residues 434–453 (AKDPVAERSDRRGDRAAPRA) is disordered. Basic and acidic residues predominate over residues 437 to 453 (PVAERSDRRGDRAAPRA). Residues 665–694 (ARHEAERLEQEARGRLERQKIMDEAEAEKS) form the IQ domain.

The vault ribonucleoprotein particle is a huge (400 A x 670 A) cage structure of 12.9 MDa. It consists of a dimer of half-vaults, with each half-vault comprising 39 identical major vault protein (MVP) chains, PARP4 and one or more vault RNAs (vRNAs). Expressed in embryos, tube feet and coelomocytes (at protein level). Not expressed in sperm cells (at protein level).

It localises to the cytoplasm. The protein localises to the nucleus. Required for normal vault structure. Vaults are multi-subunit structures that may act as scaffolds for proteins involved in signal transduction. Vaults may also play a role in nucleo-cytoplasmic transport. The protein is Major vault protein of Strongylocentrotus purpuratus (Purple sea urchin).